We begin with the raw amino-acid sequence, 78 residues long: DNA-directed RNA polymerase subunit omega (78 aa).

It belongs to the RNA polymerase subunit omega family. The RNAP catalytic core consists of 2 alpha, 1 beta, 1 beta' and 1 omega subunit. When a sigma factor is associated with the core the holoenzyme is formed, which can initiate transcription.

The catalysed reaction is RNA(n) + a ribonucleoside 5'-triphosphate = RNA(n+1) + diphosphate. Its function is as follows. Promotes RNA polymerase assembly. Latches the N- and C-terminal regions of the beta' subunit thereby facilitating its interaction with the beta and alpha subunits. The sequence is that of DNA-directed RNA polymerase subunit omega from Desulfovibrio desulfuricans (strain ATCC 27774 / DSM 6949 / MB).